Reading from the N-terminus, the 657-residue chain is Heat shock protein hsp-6 (657 aa).

A mitochondrion-targeting transit peptide spans 1–27 (MLSARSFLSSARTIARSSLMSARSLSD). Positions 637 to 657 (KNSGGDAQEAKTAEEPKKEQN) are disordered. Residues 644 to 657 (QEAKTAEEPKKEQN) show a composition bias toward basic and acidic residues.

It belongs to the heat shock protein 70 family.

It is found in the mitochondrion. The sequence is that of Heat shock protein hsp-6 from Caenorhabditis elegans.